The chain runs to 359 residues: 3-dehydroquinate synthase (359 aa).

Residues 106 to 110 (GVVGD), 130 to 131 (TT), Lys-143, Lys-152, and 170 to 173 (TLQT) each bind NAD(+). Residues Glu-185, His-248, and His-265 each contribute to the Zn(2+) site.

The protein belongs to the sugar phosphate cyclases superfamily. Dehydroquinate synthase family. It depends on Co(2+) as a cofactor. Requires Zn(2+) as cofactor. The cofactor is NAD(+).

It localises to the cytoplasm. The catalysed reaction is 7-phospho-2-dehydro-3-deoxy-D-arabino-heptonate = 3-dehydroquinate + phosphate. It participates in metabolic intermediate biosynthesis; chorismate biosynthesis; chorismate from D-erythrose 4-phosphate and phosphoenolpyruvate: step 2/7. In terms of biological role, catalyzes the conversion of 3-deoxy-D-arabino-heptulosonate 7-phosphate (DAHP) to dehydroquinate (DHQ). In Desulforamulus reducens (strain ATCC BAA-1160 / DSM 100696 / MI-1) (Desulfotomaculum reducens), this protein is 3-dehydroquinate synthase.